The primary structure comprises 393 residues: Phosphoglycerate kinase (393 aa).

Substrate-binding positions include 21 to 23 (DFN), arginine 37, 60 to 63 (HLGR), arginine 119, and arginine 152. ATP contacts are provided by residues lysine 202, glycine 291, glutamate 322, and 348 to 351 (GGDT).

The protein belongs to the phosphoglycerate kinase family. Monomer.

The protein resides in the cytoplasm. It carries out the reaction (2R)-3-phosphoglycerate + ATP = (2R)-3-phospho-glyceroyl phosphate + ADP. The protein operates within carbohydrate degradation; glycolysis; pyruvate from D-glyceraldehyde 3-phosphate: step 2/5. The polypeptide is Phosphoglycerate kinase (Coprothermobacter proteolyticus (strain ATCC 35245 / DSM 5265 / OCM 4 / BT)).